Consider the following 205-residue polypeptide: uncharacterized protein (205 aa).

To M.jannaschii MJ0638 and MJ1252 and M.tuberculosis Rv2003c.

This is an uncharacterized protein from Methanocaldococcus jannaschii (strain ATCC 43067 / DSM 2661 / JAL-1 / JCM 10045 / NBRC 100440) (Methanococcus jannaschii).